We begin with the raw amino-acid sequence, 227 residues long: YEATS domain-containing protein 4 (227 aa).

Residues 15 to 158 (RVKGVTIVKP…AMMQQLLTTS (144 aa)) form the YEATS domain. Lysine 37 is covalently cross-linked (Glycyl lysine isopeptide (Lys-Gly) (interchain with G-Cter in SUMO2)). The diacetylated histone H3 binding stretch occupies residues 93 to 97 (WGEFE). The segment at 163-227 (LGAYKHETEF…LEEDDQAKDI (65 aa)) is interaction with MLLT10. The interaction with TACC1 stretch occupies residues 168-227 (HETEFAELEVKTREKLEAAKKKTSFEIAELKERLKASRETINCLKNEIRKLEEDDQAKDI). A coiled-coil region spans residues 178–226 (KTREKLEAAKKKTSFEIAELKERLKASRETINCLKNEIRKLEEDDQAKD).

In terms of assembly, component of numerous complexes with chromatin remodeling and histone acetyltransferase activity. Component of the NuA4 histone acetyltransferase complex which contains the catalytic subunit KAT5/TIP60 and the subunits EP400, TRRAP/PAF400, BRD8/SMAP, EPC1, DMAP1/DNMAP1, RUVBL1/TIP49, RUVBL2, ING3, actin, ACTL6A/BAF53A, MORF4L1/MRG15, MORF4L2/MRGX, MRGBP, YEATS4/GAS41, VPS72/YL1 and MEAF6. The NuA4 complex interacts with MYC and the adenovirus E1A protein. Component of a NuA4-related complex which contains EP400, TRRAP/PAF400, SRCAP, BRD8/SMAP, EPC1, DMAP1/DNMAP1, RUVBL1/TIP49, RUVBL2, actin, ACTL6A/BAF53A, VPS72 and YEATS4/GAS41. Interacts with MLLT10/AF10. Also interacts with the SWI/SNF component SMARCB1/BAF47, TACC1 and TACC2, and the nuclear matrix protein NUMA1. In terms of tissue distribution, expressed in brain, heart, kidney, liver, lung, pancreas, placenta and skeletal muscle.

The protein localises to the nucleus. In terms of biological role, chromatin reader component of the NuA4 histone acetyltransferase (HAT) complex, a complex involved in transcriptional activation of select genes principally by acetylation of nucleosomal histones H4 and H2A. Specifically recognizes and binds acylated histone H3, with a preference for histone H3 diacetylated at 'Lys-18' and 'Lys-27' (H3K18ac and H3K27ac) or histone H3 diacetylated at 'Lys-14' and 'Lys-27' (H3K14ac and H3K27ac). Also able to recognize and bind crotonylated histone H3. May also recognize and bind histone H3 succinylated at 'Lys-122' (H3K122succ); additional evidences are however required to confirm this result in vivo. Plays a key role in histone variant H2AZ1/H2A.Z deposition into specific chromatin regions: recognizes and binds H3K14ac and H3K27ac on the promoters of actively transcribed genes and recruits NuA4-related complex to deposit H2AZ1/H2A.Z. H2AZ1/H2A.Z deposition is required for maintenance of embryonic stem cell. The protein is YEATS domain-containing protein 4 of Homo sapiens (Human).